Here is a 554-residue protein sequence, read N- to C-terminus: Hydroxylamine reductase (554 aa).

Residues Cys-3, Cys-6, Cys-18, and Cys-25 each coordinate [2Fe-2S] cluster. Residues His-252, Glu-276, Cys-320, Cys-408, Cys-436, Cys-461, Glu-495, and Lys-497 each contribute to the hybrid [4Fe-2O-2S] cluster site. Residue Cys-408 is modified to Cysteine persulfide.

This sequence belongs to the HCP family. [2Fe-2S] cluster serves as cofactor. Hybrid [4Fe-2O-2S] cluster is required as a cofactor.

The protein localises to the cytoplasm. It catalyses the reaction A + NH4(+) + H2O = hydroxylamine + AH2 + H(+). Catalyzes the reduction of hydroxylamine to form NH(3) and H(2)O. The polypeptide is Hydroxylamine reductase (Shewanella sp. (strain MR-7)).